The sequence spans 367 residues: Putative ionic transporter y4hA (367 aa).

Transmembrane regions (helical) follow at residues 12–32, 39–59, 74–94, 108–128, 143–163, 172–192, 221–241, 249–269, 291–311, 318–338, and 347–367; these read VPLWSWIIPLFGCVIAAMTLA, SVVLLLMSAGLLTGAVFASVH, AILLAVCVTIIEVAIIGSLML, VFAAVMIVLNGVIGLCLVLGG, AALAVLGTLATLSLVLPNFVT, AIQLVVIGLVSVVLYGVFLFV, LAAGALLVLALIAVILLAMLL, VEALGLPQAVVGVTIAGVVLL, VLGSALASIGVTIPVVAAISV, ALGLAPQNLIMLILTLFVGTI, and VLQGAVHLAIFTVFLLLSAIP.

The protein belongs to the Ca(2+):cation antiporter (CaCA) (TC 2.A.19) family.

The protein localises to the cell membrane. Functionally, possible cation transporter. The sequence is that of Putative ionic transporter y4hA from Sinorhizobium fredii (strain NBRC 101917 / NGR234).